We begin with the raw amino-acid sequence, 90 residues long: Small ribosomal subunit protein uS15 (90 aa).

It belongs to the universal ribosomal protein uS15 family. Part of the 30S ribosomal subunit. Forms a bridge to the 50S subunit in the 70S ribosome, contacting the 23S rRNA.

One of the primary rRNA binding proteins, it binds directly to 16S rRNA where it helps nucleate assembly of the platform of the 30S subunit by binding and bridging several RNA helices of the 16S rRNA. Functionally, forms an intersubunit bridge (bridge B4) with the 23S rRNA of the 50S subunit in the ribosome. This is Small ribosomal subunit protein uS15 from Campylobacter concisus (strain 13826).